Here is a 449-residue protein sequence, read N- to C-terminus: Heterogeneous nuclear ribonucleoprotein H (449 aa).

Methionine 1 carries the post-translational modification N-acetylmethionine. Methionine 2 is modified (N-acetylmethionine; in Heterogeneous nuclear ribonucleoprotein H, N-terminally processed). One can recognise an RRM 1 domain in the interval 11–90 (FVVKVRGLPW…RYVEVFKSNN (80 aa)). Serine 23 carries the phosphoserine modification. Lysine 35 is covalently cross-linked (Glycyl lysine isopeptide (Lys-Gly) (interchain with G-Cter in SUMO2)). Serine 54 and serine 63 each carry phosphoserine. Residues lysine 87 and lysine 98 each participate in a glycyl lysine isopeptide (Lys-Gly) (interchain with G-Cter in SUMO2) cross-link. Residues 111–188 (GFVRLRGLPF…RYIEIFKSSR (78 aa)) enclose the RRM 2 domain. Residue arginine 233 is modified to Dimethylated arginine; alternate. Arginine 233 carries the post-translational modification Omega-N-methylarginine; alternate. One copy of the 1-1 repeat lies at 234-249 (GAYGGGYGGYDDYNGY). The interval 234 to 433 (GAYGGGYGGY…YGGQSSMSGY (200 aa)) is 2 X 16 AA Gly-rich approximate repeats. A Phosphotyrosine modification is found at tyrosine 246. Residues 289–364 (HCVHMRGLPY…RYVELFLNST (76 aa)) enclose the RRM 3 domain. Serine 310 carries the phosphoserine modification. Repeat copies occupy residues 354-372 (HRYVELFLNSTAGASGGAY), 374-392 (HRYVELFLNSTAGASGGAY), and 418-433 (GGYGGGYGGQSSMSGY). A 2 X 19 AA perfect repeats region spans residues 354 to 392 (HRYVELFLNSTAGASGGAYEHRYVELFLNSTAGASGGAY).

As to quaternary structure, part of a ternary complex containing FUBP2, PTBP1, PTBP2 and HNRNPH1. Identified in the spliceosome C complex. Interacts with IGF2BP1. Interacts with CUGBP1; the interaction is RNA-dependent. Interacts with MBNL1; the interaction in RNA-independent.

The protein localises to the nucleus. Its subcellular location is the nucleoplasm. In terms of biological role, this protein is a component of the heterogeneous nuclear ribonucleoprotein (hnRNP) complexes which provide the substrate for the processing events that pre-mRNAs undergo before becoming functional, translatable mRNAs in the cytoplasm. Mediates pre-mRNA alternative splicing regulation. Inhibits, together with CUGBP1, insulin receptor (IR) pre-mRNA exon 11 inclusion in myoblast. Binds to the IR RNA. Binds poly(RG). This is Heterogeneous nuclear ribonucleoprotein H (Hnrnph1) from Mus musculus (Mouse).